Here is a 337-residue protein sequence, read N- to C-terminus: tRNA N6-adenosine threonylcarbamoyltransferase (337 aa).

The Fe cation site is built by His-111 and His-115. Residues 134-138 (LVSGG), Asp-167, Gly-180, and Asn-272 each bind substrate. Asp-300 contacts Fe cation.

Belongs to the KAE1 / TsaD family. Fe(2+) serves as cofactor.

It localises to the cytoplasm. It catalyses the reaction L-threonylcarbamoyladenylate + adenosine(37) in tRNA = N(6)-L-threonylcarbamoyladenosine(37) in tRNA + AMP + H(+). In terms of biological role, required for the formation of a threonylcarbamoyl group on adenosine at position 37 (t(6)A37) in tRNAs that read codons beginning with adenine. Is involved in the transfer of the threonylcarbamoyl moiety of threonylcarbamoyl-AMP (TC-AMP) to the N6 group of A37, together with TsaE and TsaB. TsaD likely plays a direct catalytic role in this reaction. The protein is tRNA N6-adenosine threonylcarbamoyltransferase of Salmonella typhi.